The following is a 199-amino-acid chain: Transgelin-2 (199 aa).

Alanine 2 carries the N-acetylalanine modification. Residue serine 11 is modified to Phosphoserine. An N6-acetyllysine mark is found at lysine 17 and lysine 20. The Calponin-homology (CH) domain maps to proline 24–alanine 136. A Phosphoserine modification is found at serine 163. A Glycyl lysine isopeptide (Lys-Gly) (interchain with G-Cter in SUMO2) cross-link involves residue lysine 171. A Calponin-like repeat occupies isoleucine 174–leucine 199. At threonine 180 the chain carries Phosphothreonine. Omega-N-methylarginine is present on residues arginine 182 and arginine 196.

It belongs to the calponin family.

This Rattus norvegicus (Rat) protein is Transgelin-2 (Tagln2).